A 182-amino-acid chain; its full sequence is ATP synthase subunit delta (182 aa).

The protein belongs to the ATPase delta chain family. F-type ATPases have 2 components, F(1) - the catalytic core - and F(0) - the membrane proton channel. F(1) has five subunits: alpha(3), beta(3), gamma(1), delta(1), epsilon(1). CF(0) has four main subunits: a(1), b(1), b'(1) and c(10-14). The alpha and beta chains form an alternating ring which encloses part of the gamma chain. F(1) is attached to F(0) by a central stalk formed by the gamma and epsilon chains, while a peripheral stalk is formed by the delta, b and b' chains.

It is found in the cellular thylakoid membrane. Its function is as follows. F(1)F(0) ATP synthase produces ATP from ADP in the presence of a proton or sodium gradient. F-type ATPases consist of two structural domains, F(1) containing the extramembraneous catalytic core and F(0) containing the membrane proton channel, linked together by a central stalk and a peripheral stalk. During catalysis, ATP synthesis in the catalytic domain of F(1) is coupled via a rotary mechanism of the central stalk subunits to proton translocation. This protein is part of the stalk that links CF(0) to CF(1). It either transmits conformational changes from CF(0) to CF(1) or is implicated in proton conduction. This Prochlorococcus marinus (strain MIT 9211) protein is ATP synthase subunit delta.